We begin with the raw amino-acid sequence, 155 residues long: Small ribosomal subunit protein uS7c (155 aa).

This sequence belongs to the universal ribosomal protein uS7 family. As to quaternary structure, part of the 30S ribosomal subunit.

The protein resides in the plastid. It is found in the chloroplast. One of the primary rRNA binding proteins, it binds directly to 16S rRNA where it nucleates assembly of the head domain of the 30S subunit. The polypeptide is Small ribosomal subunit protein uS7c (rps7) (Dioscorea bulbifera (Air potato)).